The following is a 1328-amino-acid chain: WASH complex subunit 2 (1328 aa).

The segment at 1 to 219 (MNRTSPDSEQ…VGSDRGSIVD (219 aa)) is sufficient for interaction with WASHC3, WASHC4 and WASHC5; required for interaction with WASHC1. Phosphoserine is present on residues Ser157, Ser159, Ser204, Ser205, and Ser209. Residues 201–213 (GELSSEEGSVGSD) show a composition bias toward low complexity. Disordered stretches follow at residues 201–655 (GELS…KTNL) and 675–830 (KKTQ…PKST). Composition is skewed to acidic residues over residues 219-231 (DSED…ESDD) and 248-273 (SDEE…EDIE). Ser283 is subject to Phosphoserine. Basic and acidic residues predominate over residues 288–323 (LAARIKGDVSNQRKEGHTDGKPQRTVKEKKERRTPA). Residue Thr321 is modified to Phosphothreonine. The interval 346-592 (SRGGLFSDRQ…QTSSLPPQSQ (247 aa)) is sufficient for interaction with CCDC93. Residues 347–1328 (RGGLFSDRQG…DDPLNAFGSQ (982 aa)) are interaction with VPS35. Positions 357–367 (LFDDDDESDLF) match the LFa 1 motif. 2 positions are modified to phosphoserine: Ser384 and Ser387. 2 short sequence motifs (LFa) span residues 440–455 (LFDD…DNFF) and 474–483 (IFDDDEGDLF). Over residues 441-453 (FDDDDNDSDEDDN) the composition is skewed to acidic residues. The span at 508-528 (TITLPSSKNPKLVSETKTQKG) shows a compositional bias: polar residues. Short sequence motifs (LFa) lie at residues 529 to 540 (LFSDEEDSEDLF) and 564 to 575 (LFGDEDEEDNLF). Phosphoserine occurs at positions 531 and 536. Residues 539 to 556 (LFSSQSSSKTKSASVLSS) are compositionally biased toward low complexity. Polar residues predominate over residues 582-592 (KQTSSLPPQSQ). Phosphoserine occurs at positions 610 and 611. Basic and acidic residues predominate over residues 627 to 638 (ASERKSKGERWD). 2 short sequence motifs (LFa) span residues 655-667 (LFEE…VDLF) and 683-695 (LFED…SSLF). Residues 690–699 (SGSSLFSLPP) are compositionally biased toward polar residues. A phosphoserine mark is found at Ser720, Ser744, Ser749, Ser780, and Ser795. Residues 797 to 808 (FDEDEDKVEDDS) are compositionally biased toward acidic residues. 2 consecutive short sequence motifs (LFa) follow at residues 832–840 (VFQDEELLF) and 849–855 (DPDVDLF). Disordered stretches follow at residues 863–940 (LSMP…EPSS) and 991–1088 (PTLP…AMAV). Phosphoserine is present on residues Ser867 and Ser870. Residues 871–881 (LFGDDDDDDLF) carry the LFa 10 motif. A compositionally biased stretch (basic and acidic residues) spans 894-919 (PEKKGTLRKDHKPPELTEGSKEKSTW). An interaction with phospholipids region spans residues 925 to 1328 (QDSSGLTPFK…DDPLNAFGSQ (404 aa)). The span at 1016–1034 (NKGRVKVRGKRRPQTRAAR) shows a compositional bias: basic residues. The required for interaction with F-actin-capping protein subunit alpha (CAPZA1 or CAPZA2 or CAPZA3) stretch occupies residues 1017–1035 (KGRVKVRGKRRPQTRAARR). Ser1042, Ser1060, Ser1077, and Ser1102 each carry phosphoserine. The interval 1115-1210 (AHLFDSGDIF…KKNQWKSDSH (96 aa)) is disordered. 3 consecutive short sequence motifs (LFa) follow at residues 1117–1124 (LFDSGDIF), 1157–1171 (VFPD…DDLF), and 1187–1195 (LLEDEEDLF). Phosphoserine occurs at positions 1162 and 1165. The segment covering 1196–1210 (ADQKGKKNQWKSDSH) has biased composition (basic and acidic residues). Short sequence motifs (LFa) lie at residues 1220-1226 (IFEDDIF), 1249-1257 (LFDDNIDIF), and 1277-1286 (MFDDDTDDIF). The interval 1289–1310 (GLQAKASKPKSQSAEAVSELRS) is disordered. An LFa 17 motif is present at residues 1317 to 1325 (IFDDPLNAF). Residue Ser1327 is modified to Phosphoserine.

Belongs to the FAM21 family. As to quaternary structure, component of the WASH core complex also described as WASH regulatory complex (SHRC) composed of WASHC1, WASHC2, WASHC3, WASHC4 and WASHC5; in the complex interacts (via N-terminus) directly with WASHC1. The WASH core complex associates with the F-actin-capping protein dimer (formed by CAPZA1, CAPZA2 or CAPZA3 and CAPZB) in a transient or substoichiometric manner which was initially described as WASH complex. Interacts with VPS35; mediates the association with the retromer CSC complex. Interacts with FKBP15. Interacts with CCDC93, CCDC22, VPS35L; indicative for an association of the WASH core complex with the CCC and retriever complexes. Directly interacts with TBC1D23.

The protein localises to the early endosome membrane. The protein resides in the cell membrane. Acts as a component of the WASH core complex that functions as a nucleation-promoting factor (NPF) at the surface of endosomes, where it recruits and activates the Arp2/3 complex to induce actin polymerization, playing a key role in the fission of tubules that serve as transport intermediates during endosome sorting. Mediates the recruitment of the WASH core complex to endosome membranes via binding to phospholipids and VPS35 of the retromer CSC. Mediates the recruitment of the F-actin-capping protein dimer to the WASH core complex probably promoting localized F-actin polymerization needed for vesicle scission. Via its C-terminus binds various phospholipids, most strongly phosphatidylinositol 4-phosphate (PtdIns-(4)P), phosphatidylinositol 5-phosphate (PtdIns-(5)P) and phosphatidylinositol 3,5-bisphosphate (PtdIns-(3,5)P2). Involved in the endosome-to-plasma membrane trafficking and recycling of SNX27-retromer-dependent cargo proteins, such as GLUT1. Required for the association of DNAJC13, ENTR1, ANKRD50 with retromer CSC subunit VPS35. Required for the endosomal recruitment of CCC and retriever complexes subunits COMMD1 and CCDC93 as well as the retrievere complex subunit VPS35L. The sequence is that of WASH complex subunit 2 from Rattus norvegicus (Rat).